The following is an 852-amino-acid chain: Disrupted in schizophrenia 1 homolog (852 aa).

Disordered stretches follow at residues 1–86, 236–264, and 280–320; these read MQGG…GLDP, EAEP…PRHL, and QVTR…QGGG. Positions 1–294 are interaction with MAP1A; that stretch reads MQGGGPRGAP…SSRQSECGTV (294 aa). The segment covering 65 to 79 has biased composition (polar residues); sequence AGLTGQQSQHSQSKA. The segment covering 253–263 has biased composition (basic and acidic residues); sequence SSDRPHGDPRH. Residues 288–311 show a composition bias toward low complexity; it reads QSECGTVSSSSSDTGFSSQDASSA. Positions 295–693 are interaction with TRAF3IP1; the sequence is SSSSSDTGFS…LGRVWKADLE (399 aa). Coiled coils occupy residues 367 to 397 and 449 to 496; these read EDGD…ALPS and ITRR…LLRW. The tract at residues 437–594 is required for localization to punctate cytoplasmic foci; sequence LRTTAQDSLP…LLEAKMLALS (158 aa). The tract at residues 443–852 is necessary and sufficient for interaction with PCNT and localization at the centrosome; that stretch reads DSLPASITRR…PTAGAQETEA (410 aa). The interval 595-852 is interaction with ATF4 and ATF5; sequence GSCFSTAKEL…PTAGAQETEA (258 aa). Disordered regions lie at residues 706-746 and 833-852; these read EAGS…KSPL and KEAG…ETEA. Residues 728–852 are interaction with NDEL1 and PAFAH1B1; that stretch reads TAALAVPRTP…PTAGAQETEA (125 aa). Positions 728–852 are interaction with PAFAH1B1; the sequence is TAALAVPRTP…PTAGAQETEA (125 aa). The interaction with NDEL1 stretch occupies residues 802–835; that stretch reads SHDEALFQSLQGELQTVKETLQAMILQLQPTKEA.

As to quaternary structure, interacts with NDEL1. Interacts with CCDC88A (via C-terminus); the interaction is direct. Interacts with GSK3B. Interacts with tubulin alpha, ACTN2, ANKHD1, ATF4, ATF5, CEP63, EIF3S3, MAP1A, NDEL1, PAFAH1B1, RANBP9, SPTBN4, SYNE1 and TRAF3IP1. Interaction with microtubules may be mediated in part by TRAF3IP1. Interacts (via C-terminal) with PCNT. Interacts with CHCHD6. Interacts with CCDC141. Interacts with FBXW7, the substrate-recognition component of a SCF (SKP1-CUL1-F-box protein) E3 ubiquitin-protein ligase complex; the interaction targets DISC1 for proteasomal degradation. Interacts with ZNF365. Interacts with ATF4; inhibiting ATF4 transcription factor activity by disrupting ATF4 dimerization and DNA-binding. Interacts with PDE4B. Ubiquitinated. Ubiquitination with 'Lys-48'-linked polyubiquitin chains leads to its proteasomal degradation. In terms of tissue distribution, expressed in granule cell precursors within the dentate migratory stream during the first week of postnatal life and in differentiated granule cells of the hippocampus (at protein level). Detected in heart, brain, kidney, and testis. Expressed in dentate gyrus, hippocampus and in the olfactory bulb.

It localises to the cytoplasm. Its subcellular location is the cytoskeleton. It is found in the mitochondrion. The protein resides in the microtubule organizing center. The protein localises to the centrosome. It localises to the postsynaptic density. Involved in the regulation of multiple aspects of embryonic and adult neurogenesis. Required for neural progenitor proliferation in the ventrical/subventrical zone during embryonic brain development and in the adult dentate gyrus of the hippocampus. Participates in the Wnt-mediated neural progenitor proliferation as a positive regulator by modulating GSK3B activity and CTNNB1 abundance. Plays a role as a modulator of the AKT-mTOR signaling pathway controlling the tempo of the process of newborn neurons integration during adult neurogenesis, including neuron positioning, dendritic development and synapse formation. Inhibits the activation of AKT-mTOR signaling upon interaction with CCDC88A. Regulates the migration of early-born granule cell precursors toward the dentate gyrus during the hippocampal development. Inhibits ATF4 transcription factor activity in neurons by disrupting ATF4 dimerization and DNA-binding. Plays a role, together with PCNT, in the microtubule network formation. This chain is Disrupted in schizophrenia 1 homolog, found in Mus musculus (Mouse).